The chain runs to 302 residues: 4-hydroxy-tetrahydrodipicolinate synthase (302 aa).

A pyruvate-binding site is contributed by Thr55. Tyr144 functions as the Proton donor/acceptor in the catalytic mechanism. Catalysis depends on Lys172, which acts as the Schiff-base intermediate with substrate. Pyruvate is bound at residue Val214.

It belongs to the DapA family. Homotetramer; dimer of dimers.

Its subcellular location is the cytoplasm. It carries out the reaction L-aspartate 4-semialdehyde + pyruvate = (2S,4S)-4-hydroxy-2,3,4,5-tetrahydrodipicolinate + H2O + H(+). It functions in the pathway amino-acid biosynthesis; L-lysine biosynthesis via DAP pathway; (S)-tetrahydrodipicolinate from L-aspartate: step 3/4. Functionally, catalyzes the condensation of (S)-aspartate-beta-semialdehyde [(S)-ASA] and pyruvate to 4-hydroxy-tetrahydrodipicolinate (HTPA). The protein is 4-hydroxy-tetrahydrodipicolinate synthase of Parasynechococcus marenigrum (strain WH8102).